We begin with the raw amino-acid sequence, 4036 residues long: Hybrid PKS-NRPS synthetase iliA (4036 aa).

A Ketosynthase family 3 (KS3) domain is found at 7-439 (PEPIAVIGSA…GTNAHAIIES (433 aa)). Residues cysteine 181, histidine 318, and histidine 359 each act as for beta-ketoacyl synthase activity in the active site. Residues 561–886 (IFTGQGAQWP…LKRNGSDVEA (326 aa)) are malonyl-CoA:ACP transacylase (MAT) domain. Residues 955-1092 (HELLGRRTPD…GDLVVHLGAD (138 aa)) are N-terminal hotdog fold. The interval 955-1262 (HELLGRRTPD…ATNMVGEQDA (308 aa)) is dehydratase (DH) domain. In terms of domain architecture, PKS/mFAS DH spans 955–1263 (HELLGRRTPD…TNMVGEQDAS (309 aa)). The active-site Proton acceptor; for dehydratase activity is the histidine 987. Residues 1109 to 1263 (LVNIDGERVY…TNMVGEQDAS (155 aa)) form a C-terminal hotdog fold region. Aspartate 1168 (proton donor; for dehydratase activity) is an active-site residue. Positions 1402–1601 (EDDMLDRFYM…FSGADTVMHD (200 aa)) are methyltransferase (MT) domain. Residues 2136 to 2277 (KTYFMVGMAG…SVATVIGNIG (142 aa)) are ketoreductase (KR) domain. Residues 2425–2502 (EAVAAVVKAF…QVCTWATKKV (78 aa)) form the Carrier 1 domain. Serine 2462 is modified (O-(pantetheine 4'-phosphoryl)serine). Disordered regions lie at residues 2520–2583 (AEKT…KLGT) and 2597–2621 (DADARSESTGSSGMADSDDSSNRPE). Over residues 2530 to 2540 (APAPDAAPAPA) the composition is skewed to pro residues. Residues 2627–3054 (IMSQAQSRIW…HLDITECEIY (428 aa)) are condensation (C) domain. An adenylation (A) (KR) domain region spans residues 3088–3485 (SLHSDKSAVK…GTLLCLGRLD (398 aa)). The tract at residues 3088–3485 (SLHSDKSAVK…GTLLCLGRLD (398 aa)) is reductase (RED) domain. The Carrier 2 domain maps to 3596 to 3675 (EKMTIREGEV…EMARRIDEHQ (80 aa)). Serine 3635 is modified (O-(pantetheine 4'-phosphoryl)serine).

This sequence in the C-terminal section; belongs to the NRP synthetase family.

The enzyme catalyses L-tyrosine + holo-[ACP] + 7 malonyl-CoA + acetyl-CoA + 8 AH2 + 2 S-adenosyl-L-methionine + ATP + 4 H(+) = N-[(4E,6E,10S,12Z,14E)-6,10-dimethyl-3-oxohexadeca-4,6,12,14-tetraenoyl]-L-tyrosyl-[ACP] + 8 A + AMP + 2 S-adenosyl-L-homocysteine + 7 CO2 + diphosphate + 8 CoA + 6 H2O. The protein operates within mycotoxin biosynthesis. Hybrid PKS-NRPS synthetase; part of the gene cluster that mediates the biosynthesis of ilicicolin H, a 4-hydroxy-2-pyridonealkaloid that has potent and broad antifungal activities by inhibiting the mitochondrial respiration chain. IliA assembles the backbone of ilicicolin H. The PKS portion and trans-acting enoyl reductase iliB work together to construct an octaketide, and two methyl groups are introduced by the MT domain during the chain assembly. The nascent chain is then condensed with tyrosine, catalyzed by the C domain, and the resulting PKS-NRPS hybrid is offloaded by the RED domain to form an advanced tetramic acid intermediate. The biosynthesis of ilicicolin H starts with formation of the tetramic acid by the hybrid PKS-NRPS synthetase iliA with the partnering trans-enoyl reductase iliB since iliA lacks a designated enoylreductase (ER) domain. The cytochrome P450 monooxygenase iliC then catalyzes the ring expansion of the tetramate to the acyclic 2-pyridone. The pericyclase iliD further converts the acyclic 2-pyridone into 8-epi-ilicicolin H. 8-epi-ilicicolin H might then spontaneously convert to ilicicolin H, since ilicicolin H is produced in the absence of the epimerase iliE, in contrast to what was observed for the Talaromyces variabilis ilicolin H biosynthetic pathway. This Neonectria sp. (strain DH2) protein is Hybrid PKS-NRPS synthetase iliA.